We begin with the raw amino-acid sequence, 122 residues long: MVNDTISDMLTRLRNAYLADKEQTSLKATRVVKDIAQVLVQEGFLGPIEQEENGFFTVNLKRGVKQFERVSTPGVRVYANHKQLQPVLNGMGVAVISTSQGIMTDRKARALGIGGEVLCKIW.

This sequence belongs to the universal ribosomal protein uS8 family. In terms of assembly, part of the 30S ribosomal subunit.

It is found in the plastid. Its subcellular location is the chloroplast. Functionally, one of the primary rRNA binding proteins, it binds directly to 16S rRNA central domain where it helps coordinate assembly of the platform of the 30S subunit. This chain is Small ribosomal subunit protein uS8c (rps8), found in Ostreococcus tauri.